The primary structure comprises 150 residues: Probable cyclic pyranopterin monophosphate synthase (150 aa).

Substrate is bound by residues 68-70 and 104-105; these read YCH and ME. The active site involves D119.

It belongs to the MoaC family. As to quaternary structure, homohexamer; trimer of dimers.

It carries out the reaction (8S)-3',8-cyclo-7,8-dihydroguanosine 5'-triphosphate = cyclic pyranopterin phosphate + diphosphate. It participates in cofactor biosynthesis; molybdopterin biosynthesis. In terms of biological role, catalyzes the conversion of (8S)-3',8-cyclo-7,8-dihydroguanosine 5'-triphosphate to cyclic pyranopterin monophosphate (cPMP). The polypeptide is Probable cyclic pyranopterin monophosphate synthase (Thermoplasma volcanium (strain ATCC 51530 / DSM 4299 / JCM 9571 / NBRC 15438 / GSS1)).